Here is a 452-residue protein sequence, read N- to C-terminus: MLEYMDYVLRQFEECTSWNKDNSYENIVGTSRNILQFDIPTALKVQVSNRATPYSYNTLELTNNKTINGSLTYLYTNCENLDQFIEGSSSVHLQQMTQSFRYIEPYYHHYKNNSKLEVPKVPELPISLAYGRMFYPSSSLEAMYIRRFPNYYQFILKCSSSKSGSSILTMYLQKNTGINCQELIFSTNEALLGYRFVHNFVSAGSKSNLSLYNNSSLSIGSEIWCALLNLSPGCSTTLRYCSHATNTGKPLIFTLSLNPLYGHVSSTYSIKTHENLTFCTKYDFNIYSIQSNLTLGMELWKNSSSIPVERPSEPVETIEDWPQLSHDKTPMYYHLLTRTENSGASSQRLLKDLNLTFQSSLQKINKERNVIENFNERYSEANFTQVFKVSTSLRDMNLRLLWEGKIRGFLISAGAELTQPPEISTNGLDSLEHQNWSLISPSKFGIQLQYSA.

This sequence belongs to the MDM10 family. As to quaternary structure, component of the ER-mitochondria encounter structure (ERMES) or MDM complex, composed of MMM1, MDM10, MDM12 and MDM34. Associates with the mitochondrial outer membrane sorting assembly machinery SAM(core) complex.

Its subcellular location is the mitochondrion outer membrane. In terms of biological role, component of the ERMES/MDM complex, which serves as a molecular tether to connect the endoplasmic reticulum and mitochondria. Components of this complex are involved in the control of mitochondrial shape and protein biogenesis and may function in phospholipid exchange. MDM10 is involved in the late assembly steps of the general translocase of the mitochondrial outer membrane (TOM complex). Functions in the TOM40-specific route of the assembly of outer membrane beta-barrel proteins, including the association of TOM40 with the receptor TOM22 and small TOM proteins. Can associate with the SAM(core) complex as well as the MDM12-MMM1 complex, both involved in late steps of the major beta-barrel assembly pathway, that is responsible for biogenesis of all outer membrane beta-barrel proteins. May act as a switch that shuttles between both complexes and channels precursor proteins into the TOM40-specific pathway. Plays a role in mitochondrial morphology and in the inheritance of mitochondria. In Kluyveromyces lactis (strain ATCC 8585 / CBS 2359 / DSM 70799 / NBRC 1267 / NRRL Y-1140 / WM37) (Yeast), this protein is Mitochondrial distribution and morphology protein 10.